Reading from the N-terminus, the 129-residue chain is Large ribosomal subunit protein bL20 (129 aa).

It belongs to the bacterial ribosomal protein bL20 family.

Its function is as follows. Binds directly to 23S ribosomal RNA and is necessary for the in vitro assembly process of the 50S ribosomal subunit. It is not involved in the protein synthesizing functions of that subunit. The polypeptide is Large ribosomal subunit protein bL20 (Mycobacterium sp. (strain JLS)).